A 475-amino-acid polypeptide reads, in one-letter code: Doublecortin domain-containing protein 2 (475 aa).

2 Doublecortin domains span residues 17-100 (KSVL…LNYL) and 139-221 (CTIF…LPYS). Positions 234–475 (YGQKASSLPP…ESNKASSAVA (242 aa)) are disordered. Polar residues predominate over residues 252 to 272 (GSGNYRQSKSTIGSSDNSSPQ). Ser-270 bears the Phosphoserine mark. Residues 353-365 (EKTSKDANQKDDF) show a composition bias toward basic and acidic residues. Over residues 407 to 419 (TDEENGEELDQVT) the composition is skewed to acidic residues. Polar residues predominate over residues 455 to 475 (TVTSPQENEGNESNKASSAVA).

Interacts with DVL1, DVL2 and DVL3. In terms of tissue distribution, expressed in hair cells of the inner ear.

It localises to the cell projection. Its subcellular location is the cilium. The protein resides in the cytoplasm. The protein localises to the cytoskeleton. It is found in the cilium axoneme. It localises to the kinocilium. In terms of biological role, protein that plays a role in the inhibition of canonical Wnt signaling pathway. May be involved in neuronal migration during development of the cerebral neocortex. Involved in the control of ciliogenesis and ciliary length. The chain is Doublecortin domain-containing protein 2 (Dcdc2) from Rattus norvegicus (Rat).